The sequence spans 208 residues: Thymidylate kinase (208 aa).

10 to 17 provides a ligand contact to ATP; it reads GPEGSGKT.

The protein belongs to the thymidylate kinase family.

It catalyses the reaction dTMP + ATP = dTDP + ADP. Functionally, phosphorylation of dTMP to form dTDP in both de novo and salvage pathways of dTTP synthesis. This is Thymidylate kinase from Bacillus mycoides (strain KBAB4) (Bacillus weihenstephanensis).